The chain runs to 262 residues: Acyl-[acyl-carrier-protein]--UDP-N-acetylglucosamine O-acyltransferase (262 aa).

The protein belongs to the transferase hexapeptide repeat family. LpxA subfamily. Homotrimer.

The protein localises to the cytoplasm. It carries out the reaction a (3R)-hydroxyacyl-[ACP] + UDP-N-acetyl-alpha-D-glucosamine = a UDP-3-O-[(3R)-3-hydroxyacyl]-N-acetyl-alpha-D-glucosamine + holo-[ACP]. It participates in glycolipid biosynthesis; lipid IV(A) biosynthesis; lipid IV(A) from (3R)-3-hydroxytetradecanoyl-[acyl-carrier-protein] and UDP-N-acetyl-alpha-D-glucosamine: step 1/6. Its function is as follows. Involved in the biosynthesis of lipid A, a phosphorylated glycolipid that anchors the lipopolysaccharide to the outer membrane of the cell. This Aliivibrio fischeri (strain ATCC 700601 / ES114) (Vibrio fischeri) protein is Acyl-[acyl-carrier-protein]--UDP-N-acetylglucosamine O-acyltransferase.